The chain runs to 132 residues: ATP synthase epsilon chain (132 aa).

It belongs to the ATPase epsilon chain family. In terms of assembly, F-type ATPases have 2 components, CF(1) - the catalytic core - and CF(0) - the membrane proton channel. CF(1) has five subunits: alpha(3), beta(3), gamma(1), delta(1), epsilon(1). CF(0) has three main subunits: a, b and c.

It localises to the cell inner membrane. Produces ATP from ADP in the presence of a proton gradient across the membrane. The protein is ATP synthase epsilon chain of Anaeromyxobacter sp. (strain K).